A 299-amino-acid polypeptide reads, in one-letter code: Oxygen-dependent coproporphyrinogen-III oxidase (299 aa).

Residue S92 coordinates substrate. A divalent metal cation contacts are provided by H96 and H106. H106 acts as the Proton donor in catalysis. Residue 108–110 coordinates substrate; it reads NVR. 2 residues coordinate a divalent metal cation: H145 and H175. The segment at 240–275 is important for dimerization; it reads YVEFNLVWDRGTLFGLQTGGRTESILMSMPPLVRWE. 258–260 contributes to the substrate binding site; sequence GGR.

The protein belongs to the aerobic coproporphyrinogen-III oxidase family. As to quaternary structure, homodimer. The cofactor is a divalent metal cation.

It localises to the cytoplasm. The enzyme catalyses coproporphyrinogen III + O2 + 2 H(+) = protoporphyrinogen IX + 2 CO2 + 2 H2O. The protein operates within porphyrin-containing compound metabolism; protoporphyrin-IX biosynthesis; protoporphyrinogen-IX from coproporphyrinogen-III (O2 route): step 1/1. Functionally, involved in the heme biosynthesis. Catalyzes the aerobic oxidative decarboxylation of propionate groups of rings A and B of coproporphyrinogen-III to yield the vinyl groups in protoporphyrinogen-IX. The chain is Oxygen-dependent coproporphyrinogen-III oxidase from Shigella flexneri.